A 345-amino-acid polypeptide reads, in one-letter code: UDP-3-O-acylglucosamine N-acyltransferase (345 aa).

Histidine 248 (proton acceptor) is an active-site residue.

Belongs to the transferase hexapeptide repeat family. LpxD subfamily. As to quaternary structure, homotrimer.

It carries out the reaction a UDP-3-O-[(3R)-3-hydroxyacyl]-alpha-D-glucosamine + a (3R)-hydroxyacyl-[ACP] = a UDP-2-N,3-O-bis[(3R)-3-hydroxyacyl]-alpha-D-glucosamine + holo-[ACP] + H(+). It participates in bacterial outer membrane biogenesis; LPS lipid A biosynthesis. Catalyzes the N-acylation of UDP-3-O-acylglucosamine using 3-hydroxyacyl-ACP as the acyl donor. Is involved in the biosynthesis of lipid A, a phosphorylated glycolipid that anchors the lipopolysaccharide to the outer membrane of the cell. The polypeptide is UDP-3-O-acylglucosamine N-acyltransferase (Trichodesmium erythraeum (strain IMS101)).